We begin with the raw amino-acid sequence, 620 residues long: MALLQIAEPGLSPQPHQRRLAVGIDLGTTNSLVAAVRSGLSEPLADAEGQVILPSAVRYHADRVEVGQSAKIAASQDPFNTVLSVKRLMGRGLTDVKQLGEQLPYRFVGGESHMPFIDTVQGPKSPVEVSADILKVLRERAESTLGGELVGAVITVPAYFDDSQRQATKDAARLAGLNVLRLLNEPTAAAVAYGLDQKAEGVVAIYDLGGGTFDISILRLTGGVFEVLATGGDTALGGDDFDHAIANWIVTDAALSADIDPSAQRSLLQAACSAKEALTDAESVEVAYGDWRGTLTREALNALIEPMVARSLKACRRAVRDTGIELEEVEAVVMVGGSTRVPRVREAVAELFGRQPLTQIDPDQVVAIGAAIQADTLAGNKRDGGELLLLDVIPLSLGLETMGGLMEKVIPRNTTIPVARGQEFTTYKDGQTAMKIHVLQGERELISDCRSLARFELRGIPPMVAGAAKIRVTFQVDADGLLSVSAREMGSGIESSIQVKPSYGLTDDEVTRMLKDSFEYAGDDKVARVLREHQVDAERLLEAVQGALEADGERLLDEEERLVINLQMDELRELMQGTDGYAIEQQTKRLSQVTDAFAARRLDSTVKAALAGRNLNEIEE.

The protein belongs to the heat shock protein 70 family.

In terms of biological role, chaperone involved in the maturation of iron-sulfur cluster-containing proteins. Has a low intrinsic ATPase activity which is markedly stimulated by HscB. The sequence is that of Chaperone protein HscA homolog from Pseudomonas savastanoi pv. phaseolicola (strain 1448A / Race 6) (Pseudomonas syringae pv. phaseolicola (strain 1448A / Race 6)).